Reading from the N-terminus, the 339-residue chain is Holliday junction branch migration complex subunit RuvB (339 aa).

A large ATPase domain (RuvB-L) region spans residues 1 to 187 (MQGFEDENRI…FGVICKLDYY (187 aa)). ATP contacts are provided by residues leucine 26, arginine 27, glycine 68, lysine 71, threonine 72, threonine 73, 134 to 136 (EDF), arginine 177, tyrosine 187, and arginine 224. Residue threonine 72 coordinates Mg(2+). The interval 188-258 (TVDELSKIVL…VAKDALELLG (71 aa)) is small ATPAse domain (RuvB-S). The tract at residues 261 to 339 (SLGLDFVDEK…HLKIPYPNEK (79 aa)) is head domain (RuvB-H). DNA is bound by residues arginine 297, arginine 316, and arginine 321.

The protein belongs to the RuvB family. Homohexamer. Forms an RuvA(8)-RuvB(12)-Holliday junction (HJ) complex. HJ DNA is sandwiched between 2 RuvA tetramers; dsDNA enters through RuvA and exits via RuvB. An RuvB hexamer assembles on each DNA strand where it exits the tetramer. Each RuvB hexamer is contacted by two RuvA subunits (via domain III) on 2 adjacent RuvB subunits; this complex drives branch migration. In the full resolvosome a probable DNA-RuvA(4)-RuvB(12)-RuvC(2) complex forms which resolves the HJ.

The protein resides in the cytoplasm. The enzyme catalyses ATP + H2O = ADP + phosphate + H(+). Its function is as follows. The RuvA-RuvB-RuvC complex processes Holliday junction (HJ) DNA during genetic recombination and DNA repair, while the RuvA-RuvB complex plays an important role in the rescue of blocked DNA replication forks via replication fork reversal (RFR). RuvA specifically binds to HJ cruciform DNA, conferring on it an open structure. The RuvB hexamer acts as an ATP-dependent pump, pulling dsDNA into and through the RuvAB complex. RuvB forms 2 homohexamers on either side of HJ DNA bound by 1 or 2 RuvA tetramers; 4 subunits per hexamer contact DNA at a time. Coordinated motions by a converter formed by DNA-disengaged RuvB subunits stimulates ATP hydrolysis and nucleotide exchange. Immobilization of the converter enables RuvB to convert the ATP-contained energy into a lever motion, pulling 2 nucleotides of DNA out of the RuvA tetramer per ATP hydrolyzed, thus driving DNA branch migration. The RuvB motors rotate together with the DNA substrate, which together with the progressing nucleotide cycle form the mechanistic basis for DNA recombination by continuous HJ branch migration. Branch migration allows RuvC to scan DNA until it finds its consensus sequence, where it cleaves and resolves cruciform DNA. The chain is Holliday junction branch migration complex subunit RuvB from Clostridioides difficile (strain 630) (Peptoclostridium difficile).